The following is a 223-amino-acid chain: Endonuclease NucS (223 aa).

The protein belongs to the NucS endonuclease family.

It is found in the cytoplasm. Cleaves both 3' and 5' ssDNA extremities of branched DNA structures. This is Endonuclease NucS from Mycolicibacterium vanbaalenii (strain DSM 7251 / JCM 13017 / BCRC 16820 / KCTC 9966 / NRRL B-24157 / PYR-1) (Mycobacterium vanbaalenii).